The sequence spans 314 residues: tRNA(Ile)-lysidine synthase (314 aa).

37 to 42 serves as a coordination point for ATP; that stretch reads SGGPDS.

Belongs to the tRNA(Ile)-lysidine synthase family.

The protein localises to the cytoplasm. It catalyses the reaction cytidine(34) in tRNA(Ile2) + L-lysine + ATP = lysidine(34) in tRNA(Ile2) + AMP + diphosphate + H(+). Ligates lysine onto the cytidine present at position 34 of the AUA codon-specific tRNA(Ile) that contains the anticodon CAU, in an ATP-dependent manner. Cytidine is converted to lysidine, thus changing the amino acid specificity of the tRNA from methionine to isoleucine. This chain is tRNA(Ile)-lysidine synthase, found in Corynebacterium glutamicum (strain ATCC 13032 / DSM 20300 / JCM 1318 / BCRC 11384 / CCUG 27702 / LMG 3730 / NBRC 12168 / NCIMB 10025 / NRRL B-2784 / 534).